We begin with the raw amino-acid sequence, 180 residues long: Translation initiation factor IF-3 (180 aa).

Belongs to the IF-3 family. Monomer.

The protein localises to the cytoplasm. IF-3 binds to the 30S ribosomal subunit and shifts the equilibrium between 70S ribosomes and their 50S and 30S subunits in favor of the free subunits, thus enhancing the availability of 30S subunits on which protein synthesis initiation begins. This chain is Translation initiation factor IF-3, found in Salmonella paratyphi A (strain ATCC 9150 / SARB42).